We begin with the raw amino-acid sequence, 164 residues long: MEMTSTQRLILANQYKLMGLLDSQNAQKYQRLEAIVKGGFALELKELDKEFSDVSEQECQTVLDTLEMYNALQTSYNNLSDKSALTPHRLQFAGYCAVREKKYLNYLRFITGVEGKYQEFMRCEHGCDSQVPMWDKYMRMLDVWHACPHGYHLSMTEIQNILNA.

It belongs to the UPF0304 family.

In Pasteurella multocida (strain Pm70), this protein is UPF0304 protein PM1500.